The following is a 101-amino-acid chain: Small ribosomal subunit protein uS14 (101 aa).

The disordered stretch occupies residues 1 to 21; that stretch reads MAKTSSVEKNNRRRKLADQYG.

It belongs to the universal ribosomal protein uS14 family. As to quaternary structure, part of the 30S ribosomal subunit. Contacts proteins S3 and S10.

Binds 16S rRNA, required for the assembly of 30S particles and may also be responsible for determining the conformation of the 16S rRNA at the A site. This Mesorhizobium japonicum (strain LMG 29417 / CECT 9101 / MAFF 303099) (Mesorhizobium loti (strain MAFF 303099)) protein is Small ribosomal subunit protein uS14.